The following is a 289-amino-acid chain: Ribosomal RNA small subunit methyltransferase A (289 aa).

The S-adenosyl-L-methionine site is built by N21, L23, G48, E69, D94, and N120.

The protein belongs to the class I-like SAM-binding methyltransferase superfamily. rRNA adenine N(6)-methyltransferase family. RsmA subfamily.

The protein resides in the cytoplasm. It catalyses the reaction adenosine(1518)/adenosine(1519) in 16S rRNA + 4 S-adenosyl-L-methionine = N(6)-dimethyladenosine(1518)/N(6)-dimethyladenosine(1519) in 16S rRNA + 4 S-adenosyl-L-homocysteine + 4 H(+). Its function is as follows. Specifically dimethylates two adjacent adenosines (A1518 and A1519) in the loop of a conserved hairpin near the 3'-end of 16S rRNA in the 30S particle. May play a critical role in biogenesis of 30S subunits. The chain is Ribosomal RNA small subunit methyltransferase A from Actinobacillus pleuropneumoniae serotype 7 (strain AP76).